Consider the following 662-residue polypeptide: Putative cysteine-rich receptor-like protein kinase 16 (662 aa).

Residues 1-26 (MIFIMKLKNLLPIFCFFLVSFSISSA) form the signal peptide. 2 Gnk2-homologous domains span residues 27-131 (QKCG…NRSF) and 137-244 (MTPF…LYQF). The Extracellular portion of the chain corresponds to 27–277 (QKCGKTGLFK…DDGGKISTRN (251 aa)). N-linked (GlcNAc...) asparagine glycans are attached at residues N55, N64, N106, N128, N145, N152, and N206. Residues 278 to 298 (ILGITVALAFFITVLLVLGYA) form a helical membrane-spanning segment. Residues 299-662 (LSRRRKAYQE…DASITSVDLR (364 aa)) are Cytoplasmic-facing. Residues 335 to 612 (FQKSNKLGHG…VFQMLTNTFL (278 aa)) form the Protein kinase domain. Residues 341-349 (LGHGGFGEV) and K363 each bind ATP. The active-site Proton acceptor is the D460.

The protein belongs to the protein kinase superfamily. Ser/Thr protein kinase family. CRK subfamily.

The protein localises to the membrane. It carries out the reaction L-seryl-[protein] + ATP = O-phospho-L-seryl-[protein] + ADP + H(+). It catalyses the reaction L-threonyl-[protein] + ATP = O-phospho-L-threonyl-[protein] + ADP + H(+). In Arabidopsis thaliana (Mouse-ear cress), this protein is Putative cysteine-rich receptor-like protein kinase 16 (CRK16).